The primary structure comprises 77 residues: Acyl carrier protein (77 aa).

The region spanning 1–76 is the Carrier domain; it reads MENFDKVKDI…DAVNFINNLE (76 aa). Ser-36 carries the O-(pantetheine 4'-phosphoryl)serine modification.

This sequence belongs to the acyl carrier protein (ACP) family. Post-translationally, 4'-phosphopantetheine is transferred from CoA to a specific serine of apo-ACP by AcpS. This modification is essential for activity because fatty acids are bound in thioester linkage to the sulfhydryl of the prosthetic group.

It is found in the cytoplasm. The protein operates within lipid metabolism; fatty acid biosynthesis. In terms of biological role, carrier of the growing fatty acid chain in fatty acid biosynthesis. This chain is Acyl carrier protein, found in Staphylococcus carnosus (strain TM300).